Reading from the N-terminus, the 450-residue chain is Coiled-coil domain-containing protein 149-A (450 aa).

2 coiled-coil regions span residues 1–197 (MANQ…DRRK) and 259–286 (IQHQ…LEIS). The segment at 290-358 (SLPDDRTGRG…NGQVGTQLKE (69 aa)) is disordered. Residues 343–354 (PSGTRTNGQVGT) are compositionally biased toward polar residues.

It belongs to the CCDC149 family.

The polypeptide is Coiled-coil domain-containing protein 149-A (ccdc149a) (Danio rerio (Zebrafish)).